The following is a 211-amino-acid chain: Protein-methionine-sulfoxide reductase heme-binding subunit MsrQ (211 aa).

4 consecutive transmembrane segments (helical) span residues 10 to 30, 82 to 102, 116 to 136, and 153 to 173; these read WLKV…VWAI, LWCF…ELGV, PYLT…FTST, and FVYL…KIIS.

It belongs to the MsrQ family. As to quaternary structure, heterodimer of a catalytic subunit (MsrP) and a heme-binding subunit (MsrQ). FMN serves as cofactor. Heme b is required as a cofactor.

The protein resides in the cell inner membrane. Its function is as follows. Part of the MsrPQ system that repairs oxidized periplasmic proteins containing methionine sulfoxide residues (Met-O), using respiratory chain electrons. Thus protects these proteins from oxidative-stress damage caused by reactive species of oxygen and chlorine generated by the host defense mechanisms. MsrPQ is essential for the maintenance of envelope integrity under bleach stress, rescuing a wide series of structurally unrelated periplasmic proteins from methionine oxidation, including the primary periplasmic chaperone SurA and the lipoprotein Pal. MsrQ provides electrons for reduction to the reductase catalytic subunit MsrP, using the quinone pool of the respiratory chain. The polypeptide is Protein-methionine-sulfoxide reductase heme-binding subunit MsrQ (Shigella dysenteriae serotype 1 (strain Sd197)).